Consider the following 304-residue polypeptide: Elongation factor Ts (304 aa).

Residues 80–83 (TDFV) are involved in Mg(2+) ion dislocation from EF-Tu.

This sequence belongs to the EF-Ts family.

The protein localises to the cytoplasm. Functionally, associates with the EF-Tu.GDP complex and induces the exchange of GDP to GTP. It remains bound to the aminoacyl-tRNA.EF-Tu.GTP complex up to the GTP hydrolysis stage on the ribosome. This is Elongation factor Ts from Clostridium tetani (strain Massachusetts / E88).